Reading from the N-terminus, the 295-residue chain is Nucleotide-binding protein BLi03725/BL03417 (295 aa).

16 to 23 provides a ligand contact to ATP; that stretch reads GMSGAGKT. 67–70 contacts GTP; it reads DLRG.

This sequence belongs to the RapZ-like family.

In terms of biological role, displays ATPase and GTPase activities. The sequence is that of Nucleotide-binding protein BLi03725/BL03417 from Bacillus licheniformis (strain ATCC 14580 / DSM 13 / JCM 2505 / CCUG 7422 / NBRC 12200 / NCIMB 9375 / NCTC 10341 / NRRL NRS-1264 / Gibson 46).